Consider the following 83-residue polypeptide: Cytochrome b559 subunit alpha (83 aa).

A helical transmembrane segment spans residues 21 to 35; the sequence is VIHSITIPSLFIAGW. Histidine 23 provides a ligand contact to heme.

Belongs to the PsbE/PsbF family. Heterodimer of an alpha subunit and a beta subunit. PSII is composed of 1 copy each of membrane proteins PsbA, PsbB, PsbC, PsbD, PsbE, PsbF, PsbH, PsbI, PsbJ, PsbK, PsbL, PsbM, PsbT, PsbX, PsbY, PsbZ, Psb30/Ycf12, at least 3 peripheral proteins of the oxygen-evolving complex and a large number of cofactors. It forms dimeric complexes. Heme b serves as cofactor.

Its subcellular location is the plastid. The protein localises to the chloroplast thylakoid membrane. In terms of biological role, this b-type cytochrome is tightly associated with the reaction center of photosystem II (PSII). PSII is a light-driven water:plastoquinone oxidoreductase that uses light energy to abstract electrons from H(2)O, generating O(2) and a proton gradient subsequently used for ATP formation. It consists of a core antenna complex that captures photons, and an electron transfer chain that converts photonic excitation into a charge separation. This is Cytochrome b559 subunit alpha from Daucus carota (Wild carrot).